A 153-amino-acid chain; its full sequence is MIKVGICDTTFARYDMGGAAIDELKKHTAGIKIIRRTVPGIKDLPVACKKLIEEEGCEMVMALGMPGPEEKDKVCAHEASTGLIQAQLMTNTHILEVFVHEDEEDDPEELKVLADNRAREHAQNLIMMLFKPDRLTREAGMGLREGKPDAGPL.

It belongs to the DMRL synthase family. Homooligomer. Requires Mg(2+) as cofactor.

It catalyses the reaction 2 6,7-dimethyl-8-(1-D-ribityl)lumazine + H(+) = 5-amino-6-(D-ribitylamino)uracil + riboflavin. Its pathway is cofactor biosynthesis; riboflavin biosynthesis; riboflavin from 2-hydroxy-3-oxobutyl phosphate and 5-amino-6-(D-ribitylamino)uracil: step 2/2. Inhibited by EDTA. The sequence is that of Riboflavin synthase (ribC) from Methanothermobacter thermautotrophicus (strain ATCC 29096 / DSM 1053 / JCM 10044 / NBRC 100330 / Delta H) (Methanobacterium thermoautotrophicum).